Reading from the N-terminus, the 128-residue chain is Lymphocyte antigen 6 complex locus protein G5c (128 aa).

The N-terminal stretch at 1–29 (MGAEYGCLPSTSQALYVILLIVLVRMSLV) is a signal peptide. A UPAR/Ly6 domain is found at 37–128 (LRCYRCLLET…NPQNRVFYIP (92 aa)). Cystine bridges form between Cys-39/Cys-66, Cys-42/Cys-51, Cys-58/Cys-85, Cys-94/Cys-111, and Cys-112/Cys-117. An N-linked (GlcNAc...) asparagine glycan is attached at Asn-73.

As to quaternary structure, forms oligomers. In terms of processing, N-glycosylated. As to expression, abundantly expressed in the epididymis.

The protein resides in the secreted. In terms of biological role, may have a role in hematopoietic cell differentiation. The chain is Lymphocyte antigen 6 complex locus protein G5c (LY6G5C) from Canis lupus familiaris (Dog).